The sequence spans 72 residues: V-type proton ATPase subunit e (72 aa).

The Lumenal portion of the chain corresponds to 1-2 (MS). The chain crosses the membrane as a helical span at residues 3–23 (FYTVVATFLSVVLASAVFWVL). At 24–34 (APKENQTVWRS) the chain is on the cytoplasmic side. The helical transmembrane segment at 35–55 (TIILSMSMMFLMWAVTYLSQL) threads the bilayer. Topologically, residues 56-72 (HPLVVPRRSDLRPEFAE) are lumenal.

The protein belongs to the V-ATPase e1/e2 subunit family. V-ATPase is a heteromultimeric enzyme composed of a peripheral catalytic V1 complex (components A to H) attached to an integral membrane V0 proton pore complex (components: a, c, c', c'', d, e, f and VOA1).

Its subcellular location is the vacuole membrane. Functionally, subunit of the V0 complex of vacuolar(H+)-ATPase (V-ATPase), a multisubunit enzyme composed of a peripheral complex (V1) that hydrolyzes ATP and a membrane integral complex (V0) that translocates protons. V-ATPase is responsible for acidifying and maintaining the pH of intracellular compartments. The protein is V-type proton ATPase subunit e (VMA9) of Eremothecium gossypii (strain ATCC 10895 / CBS 109.51 / FGSC 9923 / NRRL Y-1056) (Yeast).